The sequence spans 236 residues: Small ribosomal subunit protein uS2c (236 aa).

Belongs to the universal ribosomal protein uS2 family.

It localises to the plastid. In Cuscuta obtusiflora (Peruvian dodder), this protein is Small ribosomal subunit protein uS2c (rps2).